Consider the following 322-residue polypeptide: Short chain dehydrogenase AOL_s00215g274 (322 aa).

Residues 47-48 (AV), 104-106 (IAV), 197-201 (YNVSK), and 230-232 (VAT) each bind NAD(+). Tyr197 serves as the catalytic Proton acceptor.

The protein belongs to the short-chain dehydrogenases/reductases (SDR) family.

It functions in the pathway secondary metabolite biosynthesis; terpenoid biosynthesis. Functionally, short chain dehydrogenase; part of the gene cluster that mediates the biosynthesis of sesquiterpenyl epoxy-cyclohexenoids (SECs) such as anthrobotrisins and arthrosporols, metabolites that possess a novel hybrid carbon skeleton consisting of a polyketide-derived epoxycyclohexenol combined with a terpenoid-derived monocyclic sesquiterpenol substructure (PKS-PTS hybrid). The SEC pathway plays an important role for fungal soil colonization via decreasing fungal nematode-capturing ability. Within the pathway, the cytochrome P450 monooxygenase AOL_s00215g274 is involved in specific regional ketone reductions at C-4 of farnesyl epoxy-quinone. The pathway begins with the biosynthesis of 6-methylsalicylic acid (6-MSA), the first precursor of the polyketide-derived epoxycyclohexenol in arthrosporols, by the polyketide synthase (PKS) AOL_s00215g283 via condensation of 1 acetate and 3 malonate units. The 6-methylsalicylic acid decarboxylase AOL_s00215g281 then catalyzes the decarboxylation of 6-methylsalicylic acid to yield m-cresol. The cytochrome P450 monooxygenase AOL_s00215g282 further oxidizes m-cresol to yield toluquinol. With the assistance of the oxidoreductase AOL_s00215g277, the polyprenyl transferase AOL_s00215g276 catalyzes the farnesylation of toluquinol to produce farnesyl hydroquinone, the hybrid precursor for biosynthesis of SECs. Farnesyl hydroquinone undergoes epoxidation and then subsequent dehydrogenation to form farnesyl epoxy-quinone, the first and simplest SEC. The cytochrome P450 monooxygenase AOL_s00215g278 and the FAD-dependent monooxygenase AOL_s00215g279 might be involved in the oxygenation of the phenol moiety, most likely in the epoxy formation. The cytochrome P450 monooxygenases AOL_s00215g274 and AOL_s00215g280 are involved in specific regional ketone reductions at respectively C-4 and C-1 of farnesyl epoxy-quinone PubMed:33823587. This is Short chain dehydrogenase AOL_s00215g274 from Arthrobotrys oligospora (strain ATCC 24927 / CBS 115.81 / DSM 1491) (Nematode-trapping fungus).